The chain runs to 573 residues: Arginine--tRNA ligase (573 aa).

The short motif at 122-132 (PNLAKEMHVGH) is the 'HIGH' region element.

It belongs to the class-I aminoacyl-tRNA synthetase family. In terms of assembly, monomer.

The protein localises to the cytoplasm. The enzyme catalyses tRNA(Arg) + L-arginine + ATP = L-arginyl-tRNA(Arg) + AMP + diphosphate. The chain is Arginine--tRNA ligase from Laribacter hongkongensis (strain HLHK9).